The primary structure comprises 212 residues: Large ribosomal subunit protein bL25 (212 aa).

A disordered region spans residues 1–25 (MSQSTIHKIAVKKRTETGKNENNRL). Over residues 13–24 (KRTETGKNENNR) the composition is skewed to basic and acidic residues.

Belongs to the bacterial ribosomal protein bL25 family. CTC subfamily. As to quaternary structure, part of the 50S ribosomal subunit; part of the 5S rRNA/L5/L18/L25 subcomplex. Contacts the 5S rRNA. Binds to the 5S rRNA independently of L5 and L18.

Functionally, this is one of the proteins that binds to the 5S RNA in the ribosome where it forms part of the central protuberance. The protein is Large ribosomal subunit protein bL25 of Leptospira borgpetersenii serovar Hardjo-bovis (strain JB197).